The following is a 199-amino-acid chain: Peroxiredoxin 2 (199 aa).

In terms of domain architecture, Thioredoxin spans 1–152 (MGQKAPDFTV…IIRVIKALQF (152 aa)). The Cysteine sulfenic acid (-SOH) intermediate role is filled by cysteine 40. Arginine 115 serves as a coordination point for substrate.

Belongs to the peroxiredoxin family. Prx6 subfamily. Homodecamer. Pentamer of dimers that assemble into a ring structure.

It localises to the cytoplasm. The catalysed reaction is a hydroperoxide + [thioredoxin]-dithiol = an alcohol + [thioredoxin]-disulfide + H2O. Thiol-specific peroxidase that catalyzes the reduction of hydrogen peroxide and organic hydroperoxides to water and alcohols, respectively. Plays a role in cell protection against oxidative stress by detoxifying peroxides. The sequence is that of Peroxiredoxin 2 from Thermoplasma acidophilum (strain ATCC 25905 / DSM 1728 / JCM 9062 / NBRC 15155 / AMRC-C165).